A 600-amino-acid polypeptide reads, in one-letter code: NADH-ubiquinone oxidoreductase chain 5 (600 aa).

16 consecutive transmembrane segments (helical) span residues 1-21, 27-47, 81-101, 110-130, 136-156, 178-198, 200-220, 241-261, 274-294, 301-323, 327-347, 366-386, 404-424, 450-470, 488-508, and 520-540; these read MYILVLTVPLLGALVSGLFGR, GAGIFTSGCLIISLSWSLLIF, LTAVMLIVVTSISTLVHIFST, VPRFMSYLSLFTFFMILLVTS, LFIGWEGVGLCSYLLINFWLT, FVLAMLAIWDQFGCLDFASVF, IVALAPSDNTTLICLFLFIGA, TPVSALIHAATMVTAGVFLLI, LMVVTIVGSLTAFMAATIGLV, VIAYSTCSQLGYMVMACGLSQYS, FHLMNHAFFKALLFLSAGSVI, IPFTYTMIVIGSLSLMGFPYL, YLAFAHWLGVFSALLTAAYSL, WNLTLPLILLALGSIFVGYLT, SIKLMPVIFSLFGAGTAVVLY, and SPVGLAGYTFLYSAWQFNYII.

This sequence belongs to the complex I subunit 5 family.

It is found in the mitochondrion inner membrane. It carries out the reaction a ubiquinone + NADH + 5 H(+)(in) = a ubiquinol + NAD(+) + 4 H(+)(out). In terms of biological role, core subunit of the mitochondrial membrane respiratory chain NADH dehydrogenase (Complex I) that is believed to belong to the minimal assembly required for catalysis. Complex I functions in the transfer of electrons from NADH to the respiratory chain. The immediate electron acceptor for the enzyme is believed to be ubiquinone. The polypeptide is NADH-ubiquinone oxidoreductase chain 5 (ND5) (Metridium senile (Brown sea anemone)).